Here is a 116-residue protein sequence, read N- to C-terminus: Protein BIC2 (116 aa).

2 disordered regions span residues 1 to 33 (MKNT…TCFP) and 95 to 116 (DSGD…ESSC).

Its subcellular location is the nucleus. Its function is as follows. Regulates the blue-light dependent dimerization of CRY2 and formation of photobodies. Inhibits CRY phosphorylation. The polypeptide is Protein BIC2 (Arabidopsis thaliana (Mouse-ear cress)).